A 235-amino-acid chain; its full sequence is Large ribosomal subunit protein uL1 (235 aa).

The protein belongs to the universal ribosomal protein uL1 family. As to quaternary structure, part of the 50S ribosomal subunit.

In terms of biological role, binds directly to 23S rRNA. The L1 stalk is quite mobile in the ribosome, and is involved in E site tRNA release. Functionally, protein L1 is also a translational repressor protein, it controls the translation of the L11 operon by binding to its mRNA. The protein is Large ribosomal subunit protein uL1 of Symbiobacterium thermophilum (strain DSM 24528 / JCM 14929 / IAM 14863 / T).